A 557-amino-acid chain; its full sequence is Protein NRT1/ PTR FAMILY 5.14 (557 aa).

2 helical membrane-spanning segments follow: residues Ala-35–Ser-55 and Ala-78–Leu-98. Thr-103 carries the phosphothreonine modification. 10 helical membrane-spanning segments follow: residues Ile-104 to Leu-124, Ser-133 to Gly-153, Phe-183 to Val-203, Phe-209 to Phe-229, Ile-320 to Phe-340, Ile-357 to Tyr-377, Ile-401 to Lys-421, Ile-443 to Gly-463, Ile-479 to Ile-499, and Tyr-526 to Ser-546.

This sequence belongs to the major facilitator superfamily. Proton-dependent oligopeptide transporter (POT/PTR) (TC 2.A.17) family. Expressed in roots.

The protein localises to the membrane. This is Protein NRT1/ PTR FAMILY 5.14 (NPF5.14) from Arabidopsis thaliana (Mouse-ear cress).